The primary structure comprises 158 residues: Urease accessory protein UreE (158 aa).

It belongs to the UreE family.

It is found in the cytoplasm. Involved in urease metallocenter assembly. Binds nickel. Probably functions as a nickel donor during metallocenter assembly. The protein is Urease accessory protein UreE of Klebsiella pneumoniae (strain 342).